A 353-amino-acid polypeptide reads, in one-letter code: Neutral protease 2 homolog AO090001000135 (353 aa).

The N-terminal stretch at 1 to 19 (MRFISVSSLLLALAPALNA) is a signal peptide. The propeptide occupies 20–176 (VPVEVAGSAQ…TQAVKILERR (157 aa)). 2 disulfides stabilise this stretch: Cys-182-Cys-254 and Cys-261-Cys-279. His-304 serves as a coordination point for Zn(2+). Glu-305 is a catalytic residue. 2 residues coordinate Zn(2+): His-308 and Asp-319.

The protein belongs to the peptidase M35 family. The cofactor is Zn(2+).

Its subcellular location is the secreted. The enzyme catalyses Preferential cleavage of bonds with hydrophobic residues in P1'. Also 3-Asn-|-Gln-4 and 8-Gly-|-Ser-9 bonds in insulin B chain.. Its function is as follows. Secreted metalloproteinase that allows assimilation of proteinaceous substrates. Shows high activities on basic nuclear substrates such as histone and protamine. The polypeptide is Neutral protease 2 homolog AO090001000135 (Aspergillus oryzae (strain ATCC 42149 / RIB 40) (Yellow koji mold)).